Consider the following 105-residue polypeptide: uncharacterized protein (105 aa).

2 consecutive transmembrane segments (helical) span residues 56–76 (ALIW…VLII) and 85–105 (INLN…GVFY).

The protein localises to the membrane. This is an uncharacterized protein from Aedes vexans (Inland floodwater mosquito).